A 297-amino-acid polypeptide reads, in one-letter code: MTEIIDGDAVAAQLRADLTGAVETLETAGVTPRLATVLMNDKQASETYVSMKQQDCEEVGIAAEDVRIDPEASADTLFDTVAELNAREDVHGILVQDPTPDHVPDERVLSAVDPAKDVDGFHPENVGKLVGGTPRFKPCTPHGVQKLLAHQGVDPDGAEVVVVGRSNIVGKPLANLLAQKAAGGNATVTICHSHTDDLAAHTRRADVVVAACGVPELIDGDMLSGDPVVIDVGINRVDADTEKGYELVGDVDYDSAEAAASAITPVPGGVGPMTRAMLLYNTLAAASEQTGVAVALP.

NADP(+)-binding positions include 164-166, Ser-193, and Ile-234; that span reads GRS.

Belongs to the tetrahydrofolate dehydrogenase/cyclohydrolase family. Homodimer.

The enzyme catalyses (6R)-5,10-methylene-5,6,7,8-tetrahydrofolate + NADP(+) = (6R)-5,10-methenyltetrahydrofolate + NADPH. The catalysed reaction is (6R)-5,10-methenyltetrahydrofolate + H2O = (6R)-10-formyltetrahydrofolate + H(+). The protein operates within one-carbon metabolism; tetrahydrofolate interconversion. Functionally, catalyzes the oxidation of 5,10-methylenetetrahydrofolate to 5,10-methenyltetrahydrofolate and then the hydrolysis of 5,10-methenyltetrahydrofolate to 10-formyltetrahydrofolate. The protein is Bifunctional protein FolD of Halobacterium salinarum (strain ATCC 700922 / JCM 11081 / NRC-1) (Halobacterium halobium).